The sequence spans 461 residues: Complement C1r subcomponent-like protein (461 aa).

The signal sequence occupies residues 1–22 (MCWLLLWGILHTCPTQASVLLA). Residues 23–139 (QQFPQQLTSP…KGFLALYQAA (117 aa)) enclose the CUB domain. Intrachain disulfides connect cysteine 71-cysteine 89 and cysteine 164-cysteine 197. Positions 138–199 (AAVSQPNGDA…RGEEVPECVP (62 aa)) constitute a Sushi domain. A Peptidase S1 domain is found at 214–453 (TFGSSRAKPG…YVDWIKGVIE (240 aa)). Histidine 252 serves as the catalytic Charge relay system. The N-linked (GlcNAc...) asparagine glycan is linked to asparagine 265. Aspartate 308 acts as the Charge relay system in catalysis. Asparagine 332 is a glycosylation site (N-linked (GlcNAc...) asparagine). 2 disulfide bridges follow: cysteine 371–cysteine 390 and cysteine 401–cysteine 431. Residue serine 405 is the Charge relay system of the active site.

Belongs to the peptidase S1 family.

The protein resides in the secreted. Functionally, mediates the proteolytic cleavage of HP/haptoglobin in the endoplasmic reticulum. This Rattus norvegicus (Rat) protein is Complement C1r subcomponent-like protein (C1rl).